A 563-amino-acid chain; its full sequence is Probable CoA ligase CCL11 (563 aa).

ATP contacts are provided by residues 195 to 203, 328 to 333, D426, 438 to 441, and K534; these read TSGTTSSPK, HGYGMT, and IKDR. Residues 263-328 are SBD1; it reads DGEIIFNLIR…TESLGFVISH (66 aa). Residues 329–405 are SBD2; the sequence is GYGMTEMLGV…LKGSSIMLGY (77 aa).

It belongs to the ATP-dependent AMP-binding enzyme family.

Its subcellular location is the cytoplasm. The protein resides in the cytosol. The chain is Probable CoA ligase CCL11 from Humulus lupulus (European hop).